Reading from the N-terminus, the 404-residue chain is Glutamate-pyruvate aminotransferase AlaA (404 aa).

L-alanine is bound by residues G41 and N179. K240 carries the N6-(pyridoxal phosphate)lysine modification. R378 is an L-alanine binding site.

This sequence belongs to the class-I pyridoxal-phosphate-dependent aminotransferase family. As to quaternary structure, homodimer. Pyridoxal 5'-phosphate is required as a cofactor.

It catalyses the reaction L-alanine + 2-oxoglutarate = pyruvate + L-glutamate. It participates in amino-acid biosynthesis; L-alanine biosynthesis. Functionally, involved in the biosynthesis of alanine. Catalyzes the transamination of pyruvate by glutamate, leading to the formation of L-alanine and 2-oxoglutarate. Is also able to catalyze the reverse reaction. This is Glutamate-pyruvate aminotransferase AlaA (alaA) from Haemophilus influenzae (strain ATCC 51907 / DSM 11121 / KW20 / Rd).